A 154-amino-acid chain; its full sequence is UPF0225 protein YPTB2098 (154 aa).

The protein belongs to the UPF0225 family.

This Yersinia pseudotuberculosis serotype I (strain IP32953) protein is UPF0225 protein YPTB2098.